The sequence spans 169 residues: Large ribosomal subunit protein bL9 (169 aa).

Belongs to the bacterial ribosomal protein bL9 family.

Its function is as follows. Binds to the 23S rRNA. The polypeptide is Large ribosomal subunit protein bL9 (Chlamydia pneumoniae (Chlamydophila pneumoniae)).